The following is a 55-amino-acid chain: Large ribosomal subunit protein bL32c (55 aa).

It belongs to the bacterial ribosomal protein bL32 family.

It localises to the plastid. It is found in the chloroplast. The protein is Large ribosomal subunit protein bL32c of Atropa belladonna (Belladonna).